A 336-amino-acid polypeptide reads, in one-letter code: Flavonoid 4'-O-methyltransferase 3 (336 aa).

S-adenosyl-L-methionine is bound by residues Y140 and D203. Catalysis depends on H241, which acts as the Proton acceptor.

It belongs to the class I-like SAM-binding methyltransferase superfamily. Cation-independent O-methyltransferase family. In terms of assembly, homodimer. In terms of tissue distribution, expressed in leaves.

The enzyme catalyses scutellarein 7-methyl ether + S-adenosyl-L-methionine = ladanein + S-adenosyl-L-homocysteine + H(+). It carries out the reaction cirsimaritin + S-adenosyl-L-methionine = salvigenin + S-adenosyl-L-homocysteine + H(+). It catalyses the reaction cirsiliol + S-adenosyl-L-methionine = eupatorin + S-adenosyl-L-homocysteine + H(+). The catalysed reaction is genkwanin + S-adenosyl-L-methionine = apigenin 4',7-dimethyl ether + S-adenosyl-L-homocysteine. It participates in flavonoid metabolism. Its activity is regulated as follows. Substrate inhibition by genkwanin (GENK) at concentrations above 2.5 mM. Flavonoid 4'-O-methyltransferase involved in the biosynthesis of polymethoxylated flavonoids natural products such as nevadensin and salvigenin, aroma compounds which contribute to the flavor of sweet basil, and exhibit pharmacological activities such as anti-allergic, anti-oxidant, antibacterial, anti-proliferative, and anti-inflammatory effects. Catalyzes S-adenosylmethionine-dependent regioselective 4'-O-methylation of flavonoids; active on various hydroxylated flavonoid substrates, including scutellarein-7-methyl ether (SCU7Me) and cirsimaritin (CIRM), and, with a lower efficiency, hispidulin, ladanein (LAD), cirsioliol (CIRL) and genkwanin (GENK). The polypeptide is Flavonoid 4'-O-methyltransferase 3 (Ocimum basilicum (Sweet basil)).